Reading from the N-terminus, the 185-residue chain is ATP synthase subunit delta (185 aa).

It belongs to the ATPase delta chain family. As to quaternary structure, F-type ATPases have 2 components, F(1) - the catalytic core - and F(0) - the membrane proton channel. F(1) has five subunits: alpha(3), beta(3), gamma(1), delta(1), epsilon(1). F(0) has three main subunits: a(1), b(2) and c(10-14). The alpha and beta chains form an alternating ring which encloses part of the gamma chain. F(1) is attached to F(0) by a central stalk formed by the gamma and epsilon chains, while a peripheral stalk is formed by the delta and b chains.

The protein resides in the cell inner membrane. F(1)F(0) ATP synthase produces ATP from ADP in the presence of a proton or sodium gradient. F-type ATPases consist of two structural domains, F(1) containing the extramembraneous catalytic core and F(0) containing the membrane proton channel, linked together by a central stalk and a peripheral stalk. During catalysis, ATP synthesis in the catalytic domain of F(1) is coupled via a rotary mechanism of the central stalk subunits to proton translocation. In terms of biological role, this protein is part of the stalk that links CF(0) to CF(1). It either transmits conformational changes from CF(0) to CF(1) or is implicated in proton conduction. The protein is ATP synthase subunit delta of Ehrlichia chaffeensis (strain ATCC CRL-10679 / Arkansas).